The sequence spans 324 residues: ATP-dependent 6-phosphofructokinase (324 aa).

ATP is bound at residue G11. ADP is bound at residue 21 to 25; the sequence is RAVVR. Residues 72-73 and 102-105 contribute to the ATP site; these read RE and GNGS. N103 contacts Mg(2+). Substrate is bound at residue 126–128; the sequence is TID. D128 functions as the Proton acceptor in the catalytic mechanism. Residue K155 coordinates ADP. Substrate-binding positions include R163 and 170–172; that span reads MGR. ADP is bound by residues 186-188 and 214-216; these read GAE and KNF. Substrate contacts are provided by residues E223, R248, and 254 to 257; that span reads YIQR.

This sequence belongs to the phosphofructokinase type A (PFKA) family. ATP-dependent PFK group I subfamily. Prokaryotic clade 'B1' sub-subfamily. Homotetramer. Requires Mg(2+) as cofactor.

It localises to the cytoplasm. It catalyses the reaction beta-D-fructose 6-phosphate + ATP = beta-D-fructose 1,6-bisphosphate + ADP + H(+). Its pathway is carbohydrate degradation; glycolysis; D-glyceraldehyde 3-phosphate and glycerone phosphate from D-glucose: step 3/4. With respect to regulation, allosterically activated by ADP and other diphosphonucleosides, and allosterically inhibited by phosphoenolpyruvate. Functionally, catalyzes the phosphorylation of D-fructose 6-phosphate to fructose 1,6-bisphosphate by ATP, the first committing step of glycolysis. This chain is ATP-dependent 6-phosphofructokinase, found in Sulfurihydrogenibium sp. (strain YO3AOP1).